The chain runs to 143 residues: Transcriptional regulator MraZ (143 aa).

SpoVT-AbrB domains lie at 5-47 and 76-119; these read EYSH…PMAV and ALEA…SAEN.

Belongs to the MraZ family. As to quaternary structure, forms oligomers.

The protein resides in the cytoplasm. The protein localises to the nucleoid. The chain is Transcriptional regulator MraZ from Leuconostoc mesenteroides subsp. mesenteroides (strain ATCC 8293 / DSM 20343 / BCRC 11652 / CCM 1803 / JCM 6124 / NCDO 523 / NBRC 100496 / NCIMB 8023 / NCTC 12954 / NRRL B-1118 / 37Y).